Reading from the N-terminus, the 347-residue chain is Methionine import ATP-binding protein MetN (347 aa).

Residues 2–247 (ITTTGLTKVY…PGSELASALF (246 aa)) enclose the ABC transporter domain. 38 to 45 (GQSGAGKS) contacts ATP.

It belongs to the ABC transporter superfamily. Methionine importer (TC 3.A.1.24) family. As to quaternary structure, the complex is composed of two ATP-binding proteins (MetN), two transmembrane proteins (MetI) and a solute-binding protein (MetQ).

It is found in the cell membrane. It catalyses the reaction L-methionine(out) + ATP + H2O = L-methionine(in) + ADP + phosphate + H(+). The catalysed reaction is D-methionine(out) + ATP + H2O = D-methionine(in) + ADP + phosphate + H(+). In terms of biological role, part of the ABC transporter complex MetNIQ involved in methionine import. Responsible for energy coupling to the transport system. In Streptomyces avermitilis (strain ATCC 31267 / DSM 46492 / JCM 5070 / NBRC 14893 / NCIMB 12804 / NRRL 8165 / MA-4680), this protein is Methionine import ATP-binding protein MetN.